The primary structure comprises 123 residues: Small ribosomal subunit protein uS13 (123 aa).

The tract at residues 97–123 (PCRGQRTHTNSRTRKGPRRGVMAKKKK) is disordered.

The protein belongs to the universal ribosomal protein uS13 family. As to quaternary structure, part of the 30S ribosomal subunit. Forms a loose heterodimer with protein S19. Forms two bridges to the 50S subunit in the 70S ribosome.

Functionally, located at the top of the head of the 30S subunit, it contacts several helices of the 16S rRNA. In the 70S ribosome it contacts the 23S rRNA (bridge B1a) and protein L5 of the 50S subunit (bridge B1b), connecting the 2 subunits; these bridges are implicated in subunit movement. Contacts the tRNAs in the A and P-sites. This Solidesulfovibrio magneticus (strain ATCC 700980 / DSM 13731 / RS-1) (Desulfovibrio magneticus) protein is Small ribosomal subunit protein uS13.